A 144-amino-acid polypeptide reads, in one-letter code: MRLNTLSPAPGSKPSAKRVGRGIGSGLGKTCGRGHKGQKSRSGGSVRPGFEGGQMPLKQRLPKFGFTSRKSLVTAEVRLGELAKVEGDVIDLATLKTANLITKDIKFVKVVLSGEIARTVTVNGLRVTKGAKAAIEAAGGKIEE.

The tract at residues 1–57 (MRLNTLSPAPGSKPSAKRVGRGIGSGLGKTCGRGHKGQKSRSGGSVRPGFEGGQMPL) is disordered. The segment covering 21–31 (RGIGSGLGKTC) has biased composition (gly residues).

The protein belongs to the universal ribosomal protein uL15 family. As to quaternary structure, part of the 50S ribosomal subunit.

Binds to the 23S rRNA. The polypeptide is Large ribosomal subunit protein uL15 (Photobacterium profundum (strain SS9)).